Consider the following 170-residue polypeptide: Large ribosomal subunit protein uL11 (170 aa).

Belongs to the universal ribosomal protein uL11 family. Part of the ribosomal stalk of the 50S ribosomal subunit. Interacts with L10 and the large rRNA to form the base of the stalk. L10 forms an elongated spine to which L12 dimers bind in a sequential fashion forming a multimeric L10(L12)X complex.

In terms of biological role, forms part of the ribosomal stalk which helps the ribosome interact with GTP-bound translation factors. This Saccharolobus islandicus (strain M.14.25 / Kamchatka #1) (Sulfolobus islandicus) protein is Large ribosomal subunit protein uL11.